A 387-amino-acid chain; its full sequence is Protein spaetzle 5 (387 aa).

The signal sequence occupies residues 1 to 29; it reads MTKSIKRPPPFSCKQVLLTYVILAYTVAA. The propeptide occupies 30-284; that stretch reads HSSPPPCGLY…PLKKRSRTKR (255 aa). Residues 133 to 197 form a disordered region; that stretch reads QTPFGGNPQR…SGGHLYINQS (65 aa). Residues Asn-195 and Asn-204 are each glycosylated (N-linked (GlcNAc...) asparagine). Disordered stretches follow at residues 219–256 and 269–291; these read KQRQ…QSKR and GVEA…GRST. The segment covering 237 to 247 has biased composition (acidic residues); sequence QTEEAEEQDNP. Residues 276–286 show a composition bias toward basic residues; that stretch reads LKKRSRTKRQS. A Spaetzle domain is found at 291–384; sequence TLCQTTSQFI…WFPSCCVCTI (94 aa). Intrachain disulfides connect Cys-293–Cys-350, Cys-331–Cys-380, and Cys-340–Cys-382.

As to quaternary structure, homodimer; disulfide-linked. Detected in the fan-shaped body which is a component of the locomotion center in the central nervous system (CNS) (at protein level).

In terms of biological role, neurotrophin which may function as a ligand for the Toll-related receptors Toll-6 and Toll-7. Binds to Toll-7 and Toll-6, and probably acts as their ligands in the promotion of motor axon targeting and neuronal survival in the central nervous system (CNS). Involved in synaptic targeting of ISNb/d motorneurons and also some SNa motorneurons. May be involved in the normal development of specific neurons at the neuromuscular junction. The sequence is that of Protein spaetzle 5 from Drosophila melanogaster (Fruit fly).